Here is a 503-residue protein sequence, read N- to C-terminus: Apolipoprotein N-acyltransferase (503 aa).

The next 7 membrane-spanning stretches (helical) occupy residues 13-32, 34-54, 63-83, 102-122, 124-144, 173-193, and 203-223; these read RWRGLVSLFLSVLSGFLTAL, MPGFLSGALIWFSLIPLLYAV, AFLSFVYFFTHVLISFFWVLP, IVVFVLMGIIEAVPFLGFGFL, YFAPQSIVLKTLYLASVYTIF, IVSITGTLGLVFLIVSLNVLF, and LLIFPVIFFVYLLNSSVVHLL. In terms of domain architecture, CN hydrolase spans 231 to 460; sequence FKVVALQPNV…RLAGEFHIKA (230 aa). The active-site Proton acceptor is the glutamate 273. Lysine 321 is an active-site residue. The active-site Nucleophile is cysteine 371. A helical membrane pass occupies residues 468-488; the sequence is VRYGDWFFYLSVILAVVSVFI.

Belongs to the CN hydrolase family. Apolipoprotein N-acyltransferase subfamily.

Its subcellular location is the cell inner membrane. It carries out the reaction N-terminal S-1,2-diacyl-sn-glyceryl-L-cysteinyl-[lipoprotein] + a glycerophospholipid = N-acyl-S-1,2-diacyl-sn-glyceryl-L-cysteinyl-[lipoprotein] + a 2-acyl-sn-glycero-3-phospholipid + H(+). It participates in protein modification; lipoprotein biosynthesis (N-acyl transfer). Catalyzes the phospholipid dependent N-acylation of the N-terminal cysteine of apolipoprotein, the last step in lipoprotein maturation. The protein is Apolipoprotein N-acyltransferase of Thermotoga maritima (strain ATCC 43589 / DSM 3109 / JCM 10099 / NBRC 100826 / MSB8).